A 279-amino-acid chain; its full sequence is DegV domain-containing protein CPE1310 (279 aa).

In terms of domain architecture, DegV spans 4–277 (IKIITDSTCD…PKVCALFYVE (274 aa)). Residues Thr62 and Ser94 each contribute to the hexadecanoate site.

Its function is as follows. May bind long-chain fatty acids, such as palmitate, and may play a role in lipid transport or fatty acid metabolism. The sequence is that of DegV domain-containing protein CPE1310 from Clostridium perfringens (strain 13 / Type A).